We begin with the raw amino-acid sequence, 417 residues long: UDP-N-acetylglucosamine 1-carboxyvinyltransferase (417 aa).

22–23 (KN) contributes to the phosphoenolpyruvate binding site. Arginine 92 is a binding site for UDP-N-acetyl-alpha-D-glucosamine. The active-site Proton donor is cysteine 116. Cysteine 116 carries the 2-(S-cysteinyl)pyruvic acid O-phosphothioketal modification. UDP-N-acetyl-alpha-D-glucosamine-binding residues include aspartate 304 and isoleucine 326.

Belongs to the EPSP synthase family. MurA subfamily.

It is found in the cytoplasm. The enzyme catalyses phosphoenolpyruvate + UDP-N-acetyl-alpha-D-glucosamine = UDP-N-acetyl-3-O-(1-carboxyvinyl)-alpha-D-glucosamine + phosphate. It functions in the pathway cell wall biogenesis; peptidoglycan biosynthesis. In terms of biological role, cell wall formation. Adds enolpyruvyl to UDP-N-acetylglucosamine. The protein is UDP-N-acetylglucosamine 1-carboxyvinyltransferase of Geobacter metallireducens (strain ATCC 53774 / DSM 7210 / GS-15).